The primary structure comprises 898 residues: Metalloprotease StcE (898 aa).

An N-terminal signal peptide occupies residues methionine 1–alanine 35. Positions glutamate 296–phenylalanine 551 constitute a Peptidase M66 domain. Histidine 446 contacts Zn(2+). The active site involves glutamate 447. Histidine 450 and histidine 456 together coordinate Zn(2+).

It depends on Zn(2+) as a cofactor.

It is found in the secreted. Inhibited by divalent cation chelators such as BPS and EDTA. Functionally, virulence factor that contributes to intimate adherence of enterohemorrhagic E.coli (EHEC) O157:H7 to host cells. Is able to cleave the secreted human mucin 7 (MUC7) and the glycoprotein 340 (DMBT1/GP340). Also cleaves human C1 inhibitor (SERPING1), a regulator of multiple inflammatory pathways, and binds and localizes it to bacterial and host cell surfaces, protecting them from complement-mediated lysis. Therefore, the current model proposes two roles for StcE during infection: it acts first as a mucinase, allowing passage of EHEC through the oral cavity by cleaving the salivary glycoproteins that are responsible for bacterial aggregation. Similarly, in the colon, StcE cleaves the glycoproteins that protect the intestinal epithelial surface, allowing EHEC to come into close contact with host cell membranes. Secondly, it acts as an anti-inflammatory agent by localizing SERPING1 to cell membranes. In Escherichia coli O157:H7, this protein is Metalloprotease StcE (stcE).